Here is a 319-residue protein sequence, read N- to C-terminus: Ankyrin repeat domain-containing protein 1 (319 aa).

A coiled-coil region spans residues 61–89 (KSEKQREAELKKKKLEQRSKLENLEDLEI). 5 ANK repeats span residues 152-181 (YKRT…QIEF), 185-214 (LEST…KISA), 218-247 (LLST…DLNA), 251-280 (EGDT…DLNI), and 284-315 (AGKT…KTSR).

As to quaternary structure, interacts with YBX1. Interacts with TTN/titin. In terms of tissue distribution, mainly expressed in activated vascular endothelial cells. To a lower extent, also expressed in hepatoma cells.

The protein resides in the nucleus. In terms of biological role, may play an important role in endothelial cell activation. May act as a nuclear transcription factor that negatively regulates the expression of cardiac genes. Induction seems to be correlated with apoptotic cell death in hepatoma cells. This Homo sapiens (Human) protein is Ankyrin repeat domain-containing protein 1 (ANKRD1).